The following is a 148-amino-acid chain: UPF0756 membrane protein NMA2160 (148 aa).

4 consecutive transmembrane segments (helical) span residues Leu-13–Met-35, His-50–Gly-70, Phe-80–Gly-100, and Val-121–Leu-141.

This sequence belongs to the UPF0756 family.

It is found in the cell membrane. The chain is UPF0756 membrane protein NMA2160 from Neisseria meningitidis serogroup A / serotype 4A (strain DSM 15465 / Z2491).